The primary structure comprises 448 residues: tRNA-2-methylthio-N(6)-dimethylallyladenosine synthase (448 aa).

In terms of domain architecture, MTTase N-terminal spans K3–A118. 6 residues coordinate [4Fe-4S] cluster: C12, C49, C81, C155, C159, and C162. In terms of domain architecture, Radical SAM core spans R141 to E374. Residues Q377–M440 enclose the TRAM domain.

This sequence belongs to the methylthiotransferase family. MiaB subfamily. In terms of assembly, monomer. It depends on [4Fe-4S] cluster as a cofactor.

It is found in the cytoplasm. It carries out the reaction N(6)-dimethylallyladenosine(37) in tRNA + (sulfur carrier)-SH + AH2 + 2 S-adenosyl-L-methionine = 2-methylsulfanyl-N(6)-dimethylallyladenosine(37) in tRNA + (sulfur carrier)-H + 5'-deoxyadenosine + L-methionine + A + S-adenosyl-L-homocysteine + 2 H(+). Catalyzes the methylthiolation of N6-(dimethylallyl)adenosine (i(6)A), leading to the formation of 2-methylthio-N6-(dimethylallyl)adenosine (ms(2)i(6)A) at position 37 in tRNAs that read codons beginning with uridine. The chain is tRNA-2-methylthio-N(6)-dimethylallyladenosine synthase from Acidovorax sp. (strain JS42).